Consider the following 424-residue polypeptide: Deoxyguanosinetriphosphate triphosphohydrolase-like protein (424 aa).

The interval 1–27 (MYPYSDADAFRRQPERAKSSQLRTSAV) is disordered. A compositionally biased stretch (basic and acidic residues) spans 8–18 (DAFRRQPERAK). Positions 67-217 (RLTHSLEVAQ…MDFSDDIAYS (151 aa)) constitute an HD domain.

This sequence belongs to the dGTPase family. Type 2 subfamily.

This Corynebacterium glutamicum (strain ATCC 13032 / DSM 20300 / JCM 1318 / BCRC 11384 / CCUG 27702 / LMG 3730 / NBRC 12168 / NCIMB 10025 / NRRL B-2784 / 534) protein is Deoxyguanosinetriphosphate triphosphohydrolase-like protein (dgt).